Consider the following 248-residue polypeptide: 3-deoxy-manno-octulosonate cytidylyltransferase (248 aa).

The protein belongs to the KdsB family.

The protein localises to the cytoplasm. It carries out the reaction 3-deoxy-alpha-D-manno-oct-2-ulosonate + CTP = CMP-3-deoxy-beta-D-manno-octulosonate + diphosphate. It participates in nucleotide-sugar biosynthesis; CMP-3-deoxy-D-manno-octulosonate biosynthesis; CMP-3-deoxy-D-manno-octulosonate from 3-deoxy-D-manno-octulosonate and CTP: step 1/1. Its pathway is bacterial outer membrane biogenesis; lipopolysaccharide biosynthesis. In terms of biological role, activates KDO (a required 8-carbon sugar) for incorporation into bacterial lipopolysaccharide in Gram-negative bacteria. This Escherichia fergusonii (strain ATCC 35469 / DSM 13698 / CCUG 18766 / IAM 14443 / JCM 21226 / LMG 7866 / NBRC 102419 / NCTC 12128 / CDC 0568-73) protein is 3-deoxy-manno-octulosonate cytidylyltransferase.